Consider the following 324-residue polypeptide: Anthranilate phosphoribosyltransferase (324 aa).

5-phospho-alpha-D-ribose 1-diphosphate is bound by residues Gly72, 75–76 (GD), Ser80, 82–85 (NVST), 99–107 (KHGNVSITS), and Ser111. Gly72 contributes to the anthranilate binding site. Ser84 serves as a coordination point for Mg(2+). Residue Asn102 participates in anthranilate binding. Arg157 lines the anthranilate pocket. Mg(2+) contacts are provided by Asp215 and Glu216.

The protein belongs to the anthranilate phosphoribosyltransferase family. In terms of assembly, homodimer. Mg(2+) is required as a cofactor.

It catalyses the reaction N-(5-phospho-beta-D-ribosyl)anthranilate + diphosphate = 5-phospho-alpha-D-ribose 1-diphosphate + anthranilate. Its pathway is amino-acid biosynthesis; L-tryptophan biosynthesis; L-tryptophan from chorismate: step 2/5. Its function is as follows. Catalyzes the transfer of the phosphoribosyl group of 5-phosphorylribose-1-pyrophosphate (PRPP) to anthranilate to yield N-(5'-phosphoribosyl)-anthranilate (PRA). This chain is Anthranilate phosphoribosyltransferase, found in Pyrococcus abyssi (strain GE5 / Orsay).